The sequence spans 502 residues: Glycerol kinase (502 aa).

Residue Thr14 participates in ADP binding. The ATP site is built by Thr14, Thr15, and Ser16. Residue Thr14 participates in sn-glycerol 3-phosphate binding. An ADP-binding site is contributed by Arg18. Sn-glycerol 3-phosphate is bound by residues Arg84, Glu85, Tyr136, and Asp246. Glycerol is bound by residues Arg84, Glu85, Tyr136, Asp246, and Gln247. ADP contacts are provided by Thr268 and Gly311. ATP contacts are provided by Thr268, Gly311, Gln315, and Gly412. ADP contacts are provided by Gly412 and Asn416.

Belongs to the FGGY kinase family. As to quaternary structure, homotetramer and homodimer (in equilibrium). Heterodimer with EIIA-Glc. Binds 1 zinc ion per glycerol kinase EIIA-Glc dimer. The zinc ion is important for dimerization.

It carries out the reaction glycerol + ATP = sn-glycerol 3-phosphate + ADP + H(+). The protein operates within polyol metabolism; glycerol degradation via glycerol kinase pathway; sn-glycerol 3-phosphate from glycerol: step 1/1. Its activity is regulated as follows. Activity of this regulatory enzyme is affected by several metabolites. Allosterically and non-competitively inhibited by fructose 1,6-bisphosphate (FBP) and unphosphorylated phosphocarrier protein EIIA-Glc (III-Glc), an integral component of the bacterial phosphotransferase (PTS) system. In terms of biological role, key enzyme in the regulation of glycerol uptake and metabolism. Catalyzes the phosphorylation of glycerol to yield sn-glycerol 3-phosphate. This Shigella flexneri protein is Glycerol kinase.